Here is an 819-residue protein sequence, read N- to C-terminus: Myosin light chain kinase 3 (819 aa).

Positions 146–460 (VPWRRGSPGD…PGVGNPEPEQ (315 aa)) are disordered. A Phosphoserine modification is found at Ser152. Basic and acidic residues-rich tracts occupy residues 158 to 170 (EENK…EGAK) and 183 to 196 (DARE…KADV). Over residues 307-318 (GPGPQCPGPPGL) the composition is skewed to pro residues. Phosphoserine is present on residues Ser355, Ser401, and Ser408. The region spanning 515-770 (VCQHEVLGGG…ATQCLKHEWL (256 aa)) is the Protein kinase domain. Residues 521–529 (LGGGRFGQV) and Lys544 each bind ATP. Catalysis depends on Asp636, which acts as the Proton acceptor.

This sequence belongs to the protein kinase superfamily. CAMK Ser/Thr protein kinase family. The cofactor is Mg(2+). Phosphorylated on serine residues.

It localises to the cytoplasm. The enzyme catalyses L-seryl-[myosin light chain] + ATP = O-phospho-L-seryl-[myosin light chain] + ADP + H(+). It catalyses the reaction L-threonyl-[myosin light chain] + ATP = O-phospho-L-threonyl-[myosin light chain] + ADP + H(+). Kinase that phosphorylates MYL2 in vitro. Promotes sarcomere formation in cardiomyocytes and increases cardiomyocyte contractility. This Pongo abelii (Sumatran orangutan) protein is Myosin light chain kinase 3 (MYLK3).